Consider the following 297-residue polypeptide: Syntaxin-4 (297 aa).

Residues 1 to 12 (MRDRTHELRQGD) show a composition bias toward basic and acidic residues. Residues 1–21 (MRDRTHELRQGDDSSDEEDKE) are disordered. Residues 1 to 275 (MRDRTHELRQ…QKKARKKKVL (275 aa)) are Cytoplasmic-facing. Phosphoserine occurs at positions 14 and 15. At T31 the chain carries Phosphothreonine. Phosphoserine occurs at positions 36, 117, 208, and 248. Residues 43–163 (HKVRTIRQTI…ERIRRQLKIT (121 aa)) are a coiled coil. Residues 154–297 (ERIRRQLKIT…AVIIGVTVVG (144 aa)) form an interaction with CENPF region. Residues 200–262 (LNEISARHSE…ERGQEHVKTA (63 aa)) form the t-SNARE coiled-coil homology domain. Residues 276-296 (IAICVSITVVLLAVIIGVTVV) traverse the membrane as a helical; Anchor for type IV membrane protein segment. Position 297 (G297) is a topological domain, extracellular.

The protein belongs to the syntaxin family. As to quaternary structure, component of the SNARE complex composed of STX4, SNAP23 and VAMP7 that interacts with SYT7 during lysosomal exocytosis. Found in a complex with VAMP8 and SNAP23. Detected in a complex with SNAP23 and STXBP4. Interacts with VAMP2. Interacts with SNAP23 and SNAPIN. Interacts with LLGL1. Interacts (via C-terminus) with CENPF. Interacts with DOC2B. Interacts with STXBP6. Interacts with STXBP3; excludes interaction with DOC2B and SNAP25. Interacts with STXBP4; excludes interaction with VAMP2. Interacts with STXBP5L. In terms of tissue distribution, expressed in neutrophils and neutrophil-differentiated HL-60 cells. Expression in neutrophils increases with differentiation.

Its subcellular location is the cell membrane. It localises to the cell projection. The protein resides in the neuron projection. It is found in the stereocilium. Its function is as follows. Plasma membrane t-SNARE that mediates docking of transport vesicles. Necessary for the translocation of SLC2A4 from intracellular vesicles to the plasma membrane. In neurons, recruited at neurite tips to membrane domains rich in the phospholipid 1-oleoyl-2-palmitoyl-PC (OPPC) which promotes neurite tip surface expression of the dopamine transporter SLC6A3/DAT by facilitating fusion of SLC6A3-containing transport vesicles with the plasma membrane. Together with STXB3 and VAMP2, may also play a role in docking/fusion of intracellular GLUT4-containing vesicles with the cell surface in adipocytes and in docking of synaptic vesicles at presynaptic active zones. Required for normal hearing. The sequence is that of Syntaxin-4 (STX4) from Homo sapiens (Human).